The chain runs to 862 residues: Kinesin-like protein KIN-7J (862 aa).

The 323-residue stretch at 9 to 331 (RIVVSVRLRP…LLFANCAKDV (323 aa)) folds into the Kinesin motor domain. Residue 95–102 (GQTSSGKT) coordinates ATP. The stretch at 340–415 (VMSDKALVKH…NFRKVASDGD (76 aa)) forms a coiled coil. Composition is skewed to basic and acidic residues over residues 475–499 (EEHE…KEVQ) and 518–531 (PEKK…KHSE). 2 disordered regions span residues 475-532 (EEHE…HSES) and 596-643 (DDSA…STCN). A compositionally biased stretch (polar residues) spans 598–610 (SASTTPSSETFRY). The span at 613-629 (RRPEKVRKSLSPDEIAD) shows a compositional bias: basic and acidic residues.

The protein belongs to the TRAFAC class myosin-kinesin ATPase superfamily. Kinesin family. KIN-7 subfamily.

This chain is Kinesin-like protein KIN-7J, found in Oryza sativa subsp. japonica (Rice).